The sequence spans 232 residues: LexA repressor (232 aa).

The segment at 1–25 (MSDDSSDSTSGAGSGRGRDSGLTER) is disordered. The segment covering 16–25 (RGRDSGLTER) has biased composition (basic and acidic residues). Residues 46 to 66 (IREIGDAVGLTSTSSVAHQLR) constitute a DNA-binding region (H-T-H motif). Active-site for autocatalytic cleavage activity residues include Ser-156 and Lys-193.

The protein belongs to the peptidase S24 family. Homodimer.

It catalyses the reaction Hydrolysis of Ala-|-Gly bond in repressor LexA.. In terms of biological role, represses a number of genes involved in the response to DNA damage (SOS response), including recA and lexA. In the presence of single-stranded DNA, RecA interacts with LexA causing an autocatalytic cleavage which disrupts the DNA-binding part of LexA, leading to derepression of the SOS regulon and eventually DNA repair. This is LexA repressor from Mycolicibacterium vanbaalenii (strain DSM 7251 / JCM 13017 / BCRC 16820 / KCTC 9966 / NRRL B-24157 / PYR-1) (Mycobacterium vanbaalenii).